We begin with the raw amino-acid sequence, 268 residues long: Nickel import ATP-binding protein NikE (268 aa).

Positions Leu4–Asn252 constitute an ABC transporter domain. Gly45–Ser52 provides a ligand contact to ATP.

The protein belongs to the ABC transporter superfamily. Nickel importer (TC 3.A.1.5.3) family. The complex is composed of two ATP-binding proteins (NikD and NikE), two transmembrane proteins (NikB and NikC) and a solute-binding protein (NikA).

It is found in the cell inner membrane. It catalyses the reaction Ni(2+)(out) + ATP + H2O = Ni(2+)(in) + ADP + phosphate + H(+). In terms of biological role, part of the ABC transporter complex NikABCDE involved in nickel import. Responsible for energy coupling to the transport system. The chain is Nickel import ATP-binding protein NikE from Shigella flexneri.